The primary structure comprises 139 residues: Putative nickel-responsive regulator (139 aa).

The Ni(2+) site is built by His79, His90, His92, and Cys98.

It belongs to the transcriptional regulatory CopG/NikR family. Ni(2+) serves as cofactor.

Its function is as follows. Transcriptional regulator. This Geobacter metallireducens (strain ATCC 53774 / DSM 7210 / GS-15) protein is Putative nickel-responsive regulator.